Here is a 63-residue protein sequence, read N- to C-terminus: Kappa-theraphotoxin-Cg3a 1 (63 aa).

Residues 1–21 (MKNTSILFILGLALLLVLAFE) form the signal peptide. The propeptide occupies 22–29 (VQVGESDG). Intrachain disulfides connect Cys-31–Cys-46, Cys-38–Cys-51, and Cys-45–Cys-58.

This sequence belongs to the neurotoxin 10 (Hwtx-1) family. 44 (Jztx-4) subfamily. As to expression, expressed by the venom gland.

It is found in the secreted. Its function is as follows. Gating modifier of Kv2.1/KCNB1, Kv2.2/KCNB2 and Kv4.3/KCND3 channels. This is Kappa-theraphotoxin-Cg3a 1 from Chilobrachys guangxiensis (Chinese earth tiger tarantula).